Here is a 747-residue protein sequence, read N- to C-terminus: Putative ankyrin repeat protein FPV222 (747 aa).

14 ANK repeats span residues 38-67 (DNCT…DPNI), 103-132 (NYRN…LVNM), 136-165 (KNIT…NTNA), 169-198 (YGET…NVNV), 202-231 (DSIT…DTNA), 234-263 (LERF…NTNV), 294-323 (PCTV…NPDI), 328-357 (TSTY…YTDV), 361-393 (QQNT…SFNL), 397-426 (KGRT…DTNI), 430-460 (MSFT…DPNL), 464-493 (KEVS…DIKP), 495-524 (NECY…ELEV), and 529-559 (DHYV…DLNK).

The sequence is that of Putative ankyrin repeat protein FPV222 from Vertebrata (FPV).